The following is a 266-amino-acid chain: uncharacterized protein (266 aa).

The first 22 residues, methionine 1 to glycine 22, serve as a signal peptide directing secretion. The N-palmitoyl cysteine moiety is linked to residue cysteine 23. The S-diacylglycerol cysteine moiety is linked to residue cysteine 23.

Belongs to the staphylococcal tandem lipoprotein family.

It is found in the cell membrane. This is an uncharacterized protein from Staphylococcus aureus (strain USA300).